Here is an 876-residue protein sequence, read N- to C-terminus: Phosphoenolpyruvate carboxylase (876 aa).

Residues histidine 138 and lysine 543 contribute to the active site.

This sequence belongs to the PEPCase type 1 family. Mg(2+) is required as a cofactor.

The catalysed reaction is oxaloacetate + phosphate = phosphoenolpyruvate + hydrogencarbonate. Its function is as follows. Forms oxaloacetate, a four-carbon dicarboxylic acid source for the tricarboxylic acid cycle. This Vibrio atlanticus (strain LGP32) (Vibrio splendidus (strain Mel32)) protein is Phosphoenolpyruvate carboxylase.